The following is a 268-amino-acid chain: Undecaprenyl-diphosphatase (268 aa).

Transmembrane regions (helical) follow at residues 5–25 (SIIS…IPVS), 43–63 (GNTF…LVYF), 84–104 (LSVL…HGFI), 109–129 (FETP…LYVI), 184–204 (AAEF…ALDL), 213–233 (IDDI…GIFV), and 248–268 (PFAI…WLLG).

It belongs to the UppP family.

It is found in the cell inner membrane. The catalysed reaction is di-trans,octa-cis-undecaprenyl diphosphate + H2O = di-trans,octa-cis-undecaprenyl phosphate + phosphate + H(+). In terms of biological role, catalyzes the dephosphorylation of undecaprenyl diphosphate (UPP). Confers resistance to bacitracin. In Sinorhizobium medicae (strain WSM419) (Ensifer medicae), this protein is Undecaprenyl-diphosphatase.